A 463-amino-acid chain; its full sequence is Serine carboxypeptidase-like 32 (463 aa).

The first 22 residues, 1–22 (MMNISNVSIALYLCTLFAFVSS), serve as a signal peptide directing secretion. Intrachain disulfides connect Cys-86-Cys-345, Cys-249-Cys-262, and Cys-286-Cys-313. N-linked (GlcNAc...) asparagine glycosylation occurs at Asn-137. The active site involves Ser-179. Asn-201 and Asn-250 each carry an N-linked (GlcNAc...) asparagine glycan. Asn-341 and Asn-354 each carry an N-linked (GlcNAc...) asparagine glycan. Active-site residues include Asp-384 and His-436.

The protein belongs to the peptidase S10 family. As to expression, expressed in flowers.

The protein resides in the secreted. Its function is as follows. Probable carboxypeptidase. This is Serine carboxypeptidase-like 32 (SCPL32) from Arabidopsis thaliana (Mouse-ear cress).